The chain runs to 483 residues: Bifunctional protein HldE (483 aa).

Positions M1–P327 are ribokinase. N201 to E204 provides a ligand contact to ATP. The active site involves D272. The cytidylyltransferase stretch occupies residues F354 to S483.

It in the N-terminal section; belongs to the carbohydrate kinase PfkB family. This sequence in the C-terminal section; belongs to the cytidylyltransferase family. Homodimer.

It catalyses the reaction D-glycero-beta-D-manno-heptose 7-phosphate + ATP = D-glycero-beta-D-manno-heptose 1,7-bisphosphate + ADP + H(+). The enzyme catalyses D-glycero-beta-D-manno-heptose 1-phosphate + ATP + H(+) = ADP-D-glycero-beta-D-manno-heptose + diphosphate. Its pathway is nucleotide-sugar biosynthesis; ADP-L-glycero-beta-D-manno-heptose biosynthesis; ADP-L-glycero-beta-D-manno-heptose from D-glycero-beta-D-manno-heptose 7-phosphate: step 1/4. The protein operates within nucleotide-sugar biosynthesis; ADP-L-glycero-beta-D-manno-heptose biosynthesis; ADP-L-glycero-beta-D-manno-heptose from D-glycero-beta-D-manno-heptose 7-phosphate: step 3/4. Its function is as follows. Catalyzes the phosphorylation of D-glycero-D-manno-heptose 7-phosphate at the C-1 position to selectively form D-glycero-beta-D-manno-heptose-1,7-bisphosphate. In terms of biological role, catalyzes the ADP transfer from ATP to D-glycero-beta-D-manno-heptose 1-phosphate, yielding ADP-D-glycero-beta-D-manno-heptose. The protein is Bifunctional protein HldE of Caulobacter vibrioides (strain ATCC 19089 / CIP 103742 / CB 15) (Caulobacter crescentus).